The following is a 298-amino-acid chain: Protease HtpX homolog (298 aa).

A run of 2 helical transmembrane segments spans residues 14 to 34 (VVLLVVFFALLALIGASAGYL) and 39 to 59 (YAMGLVLALVIGVIYATSMIF). H143 provides a ligand contact to Zn(2+). E144 is a catalytic residue. Residue H147 participates in Zn(2+) binding. The next 2 membrane-spanning stretches (helical) occupy residues 158-178 (IAVALASAVTVISSIGGRMLW) and 197-217 (IITLLLSLLSLLLAPLVASLI). E226 is a binding site for Zn(2+).

Belongs to the peptidase M48B family. The cofactor is Zn(2+).

The protein localises to the cell membrane. In Streptococcus pyogenes serotype M28 (strain MGAS6180), this protein is Protease HtpX homolog.